A 133-amino-acid chain; its full sequence is UPF0102 protein bll0669 (133 aa).

This sequence belongs to the UPF0102 family.

This is UPF0102 protein bll0669 from Bradyrhizobium diazoefficiens (strain JCM 10833 / BCRC 13528 / IAM 13628 / NBRC 14792 / USDA 110).